The following is a 357-amino-acid chain: Queuosine-tRNA galactosyltransferase (357 aa).

This sequence belongs to the glycosyltransferase 2 family.

The protein resides in the cytoplasm. The enzyme catalyses queuosine(34) in tRNA(Tyr) + UDP-alpha-D-galactose = O-5''-beta-D-galactosylqueuosine(34) in tRNA(Tyr) + UDP + H(+). Glycosyltransferase that specifically catalyzes galactosylation of cytoplasmic tRNA(Tyr) modified with queuosine at position 34 (queuosine(34)). Galactosylates the cyclopentene hydroxyl group of queuosine(34) in tRNA(Tyr) to form galactosyl-queuosine(34). Mannosylation of queuosine(34) in tRNA(Tyr) is required to slow-down elongation at cognate codons UAC and suppress stop codon readthrough, thereby regulating protein translation. The chain is Queuosine-tRNA galactosyltransferase from Rattus norvegicus (Rat).